A 161-amino-acid chain; its full sequence is UPF0225 protein NTHI0386 (161 aa).

The protein belongs to the UPF0225 family.

This is UPF0225 protein NTHI0386 from Haemophilus influenzae (strain 86-028NP).